The sequence spans 185 residues: Ribosome-recycling factor (185 aa).

This sequence belongs to the RRF family.

It is found in the cytoplasm. Its function is as follows. Responsible for the release of ribosomes from messenger RNA at the termination of protein biosynthesis. May increase the efficiency of translation by recycling ribosomes from one round of translation to another. This is Ribosome-recycling factor from Streptococcus pyogenes serotype M18 (strain MGAS8232).